Consider the following 386-residue polypeptide: Glucose-1-phosphate adenylyltransferase (386 aa).

Alpha-D-glucose 1-phosphate-binding positions include Tyr99, Gly164, 179–180, and Ser190; that span reads EK.

This sequence belongs to the bacterial/plant glucose-1-phosphate adenylyltransferase family. As to quaternary structure, homotetramer.

It catalyses the reaction alpha-D-glucose 1-phosphate + ATP + H(+) = ADP-alpha-D-glucose + diphosphate. It functions in the pathway glycan biosynthesis; glycogen biosynthesis. Involved in the biosynthesis of ADP-glucose, a building block required for the elongation reactions to produce glycogen. Catalyzes the reaction between ATP and alpha-D-glucose 1-phosphate (G1P) to produce pyrophosphate and ADP-Glc. In Clostridioides difficile (strain 630) (Peptoclostridium difficile), this protein is Glucose-1-phosphate adenylyltransferase.